Consider the following 406-residue polypeptide: 3-isopropylmalate dehydrogenase, chloroplastic (406 aa).

Residues 1–34 (MAAALQTNIRPVKFPATLRALTKQSSPAPFRVRC) constitute a chloroplast transit peptide. Ser-71 bears the Phosphoserine mark. Position 117–130 (117–130 (GYKWDKNEKHLKPE)) interacts with NAD(+). The substrate site is built by Arg-137, Arg-147, Arg-175, and Asp-265. Asp-265, Asp-289, and Asp-293 together coordinate Mg(2+). Position 323–335 (323–335 (GSAPDIAGQDKAN)) interacts with NAD(+).

This sequence belongs to the isocitrate and isopropylmalate dehydrogenases family. In terms of assembly, homodimer. The cofactor is Mg(2+). Mn(2+) serves as cofactor.

Its subcellular location is the plastid. The protein resides in the chloroplast. It carries out the reaction (2R,3S)-3-isopropylmalate + NAD(+) = 4-methyl-2-oxopentanoate + CO2 + NADH. The protein operates within amino-acid biosynthesis; L-leucine biosynthesis; L-leucine from 3-methyl-2-oxobutanoate: step 3/4. In terms of biological role, catalyzes the oxidation of 3-carboxy-2-hydroxy-4-methylpentanoate (3-isopropylmalate) to 3-carboxy-4-methyl-2-oxopentanoate. The product decarboxylates to 4-methyl-2 oxopentanoate. This is 3-isopropylmalate dehydrogenase, chloroplastic from Brassica napus (Rape).